Reading from the N-terminus, the 262-residue chain is MAFHVMIIPSMNCPSDCSYCWGVDRDSRVMDMETVREMVSWLMEFRNEPATFTFHGGEPLLAGYEFYRDTLKLISERLSFLKPAFAIQTNLWLMTDEMAELFAEYSIPIGSSLDGPREINDYQRGDGYFDRTMQGYEIARKHGLRVSFISTFTSYSIRRREEIFNFFLENGMNLKLHPALPSLKSSDPEEWAITAEEYGDLLLYLLDSYLEHFGEIEIQNIDHFAKSAFLRRGLYVHMLIVWATPSQLTPTVIYTHAIASLV.

Residues 1 to 211 form the Radical SAM core domain; it reads MAFHVMIIPS…LLYLLDSYLE (211 aa). The [4Fe-4S] cluster site is built by C13, C17, and C20.

It belongs to the radical SAM superfamily. Anaerobic sulfatase-maturating enzyme family. It depends on [4Fe-4S] cluster as a cofactor.

This is an uncharacterized protein from Methanothermobacter thermautotrophicus (strain ATCC 29096 / DSM 1053 / JCM 10044 / NBRC 100330 / Delta H) (Methanobacterium thermoautotrophicum).